The primary structure comprises 74 residues: Mitochondrial import receptor subunit TOM6 homolog (74 aa).

Positions 1-14 are enriched in low complexity; the sequence is MASSGAGVTAAGSA. Positions 1 to 24 are disordered; that stretch reads MASSGAGVTAAGSANEAPEIPDNV. Position 2 is an N-acetylalanine (Ala-2).

It belongs to the Tom6 family. As to quaternary structure, forms part of the preprotein translocase complex of the outer mitochondrial membrane (TOM complex) which consists of at least 7 different proteins (TOMM5, TOMM6, TOMM7, TOMM20, TOMM22, TOMM40 and TOMM70).

The protein localises to the mitochondrion outer membrane. The protein is Mitochondrial import receptor subunit TOM6 homolog (TOMM6) of Bos taurus (Bovine).